The primary structure comprises 161 residues: Small ribosomal subunit protein uS19 (161 aa).

Residues 1 to 19 (MARQKKYSGKGGARKKNKQ) are compositionally biased toward basic residues. A disordered region spans residues 1 to 26 (MARQKKYSGKGGARKKNKQKQSVAPR).

The protein belongs to the universal ribosomal protein uS19 family.

In terms of biological role, protein S19 forms a complex with S13 that binds strongly to the 16S ribosomal RNA. In Methanococcus maripaludis (strain C7 / ATCC BAA-1331), this protein is Small ribosomal subunit protein uS19.